The following is a 351-amino-acid chain: Sesquiterpene synthase 14 (351 aa).

Mg(2+) is bound by residues D87, N223, S227, and E231. Positions 87–91 match the DDXXD motif motif; that stretch reads DEYTD. Positions 223–231 match the NSE/DTE motif motif; the sequence is NDIASYNKE. (2E,6E)-farnesyl diphosphate-binding residues include R312 and Y313.

The protein belongs to the terpene synthase family. Mg(2+) is required as a cofactor.

The catalysed reaction is (2E,6E)-farnesyl diphosphate = pentalenene + diphosphate. Terpene cyclase that catalyzes the cyclization of farnesyl diphosphate (FPP) to pentalenene as a major product, as well as caryophyllene. This Postia placenta (strain ATCC 44394 / Madison 698-R) (Brown rot fungus) protein is Sesquiterpene synthase 14.